The following is a 227-amino-acid chain: UPF0173 metal-dependent hydrolase BPUM_2573 (227 aa).

This sequence belongs to the UPF0173 family.

This Bacillus pumilus (strain SAFR-032) protein is UPF0173 metal-dependent hydrolase BPUM_2573.